A 319-amino-acid polypeptide reads, in one-letter code: Acetyl esterase (319 aa).

The short motif at 91–93 (HGG) is the Involved in the stabilization of the negatively charged intermediate by the formation of the oxyanion hole element. Active-site residues include serine 165, aspartate 262, and histidine 292.

The protein belongs to the 'GDXG' lipolytic enzyme family. Homodimer. Interacts with MalT and MelA.

The protein resides in the cytoplasm. Displays esterase activity towards short chain fatty esters (acyl chain length of up to 8 carbons). Able to hydrolyze triacetylglycerol (triacetin) and tributyrylglycerol (tributyrin), but not trioleylglycerol (triolein) or cholesterol oleate. Negatively regulates MalT activity by antagonizing maltotriose binding. Inhibits MelA galactosidase activity. This chain is Acetyl esterase, found in Escherichia coli (strain 55989 / EAEC).